Here is a 478-residue protein sequence, read N- to C-terminus: Serralysin C (478 aa).

Positions 1–17 are excised as a propeptide; sequence MEKNLSSRDDDALHSLS. Zn(2+) is bound at residue histidine 187. Glutamate 188 is an active-site residue. Residues histidine 191 and tyrosine 227 each contribute to the Zn(2+) site. Positions 264, 266, 296, 298, 299, 301, 338, 340, 345, 347, 349, 354, 356, 358, 362, 363, 364, 365, 367, 371, 372, 374, 376, 380, 381, 383, 385, 394, 401, and 411 each coordinate Ca(2+). 2 Hemolysin-type calcium-binding repeats span residues 343-360 and 361-378; these read IGGSGNDLLIGNNADNTL and RGGAGDDVLFGGSGADRL.

This sequence belongs to the peptidase M10B family. Ca(2+) is required as a cofactor. Zn(2+) serves as cofactor.

The protein localises to the secreted. It carries out the reaction Preferential cleavage of bonds with hydrophobic residues in P1'.. The chain is Serralysin C (prtC) from Dickeya chrysanthemi (Pectobacterium chrysanthemi).